The chain runs to 375 residues: MQCALYDAGRCRSCQWITQLIPEQLSAKTADLKNLLADFSVEEWCESVSGPEQGFRNKAKMVVSGSVEKPLLGMLHRDGTPEDLCDCPLYPSSFAPVFAALKPFIARAGLTPYNVARKRGELKYILLTESQSDGGMMLRFVLRSETKLAQLRKALPWLQEQLPQLKVITANIQPIHMAIMEGETEIYLTEQQALAERFNDVPLWIRPQSFFQTNPVVASQLYATARDWVRQLPVKHMWDLFCGVGGFGLHCATPDMQLTGIEIAPEAIACAKQSAAELGLTRLQFQALDSTQFATTQGEVPELVLVNPPRRGIGKPLCDYLSTMAPRFIIYSSCNAQTMTKDIRELSGYRIERVQLFDMFPHTAHYEVLTLLVKQ.

Residues Cys3, Cys11, Cys14, and Cys87 each contribute to the [4Fe-4S] cluster site. 4 residues coordinate S-adenosyl-L-methionine: Gln212, Phe241, Glu262, and Asn307. The active-site Nucleophile is the Cys334.

It belongs to the class I-like SAM-binding methyltransferase superfamily. RNA M5U methyltransferase family. RlmC subfamily.

It catalyses the reaction uridine(747) in 23S rRNA + S-adenosyl-L-methionine = 5-methyluridine(747) in 23S rRNA + S-adenosyl-L-homocysteine + H(+). Its function is as follows. Catalyzes the formation of 5-methyl-uridine at position 747 (m5U747) in 23S rRNA. The polypeptide is 23S rRNA (uracil(747)-C(5))-methyltransferase RlmC (Escherichia fergusonii (strain ATCC 35469 / DSM 13698 / CCUG 18766 / IAM 14443 / JCM 21226 / LMG 7866 / NBRC 102419 / NCTC 12128 / CDC 0568-73)).